The primary structure comprises 68 residues: Protease A inhibitor 3 (68 aa).

The residue at position 1 (methionine 1) is an N-acetylmethionine. Over residues 1-14 (MNTDQQKVSEIFQS) the composition is skewed to polar residues. 2 disordered regions span residues 1–21 (MNTDQQKVSEIFQSSKEKLQG) and 33–68 (MASQDKDGKTTDADESEKHNYQEQYNKLKGAGHKKE). The interval 1-32 (MNTDQQKVSEIFQSSKEKLQGDAKVVSDAFKK) is inhibitory domain. Residues 33-53 (MASQDKDGKTTDADESEKHNY) are compositionally biased toward basic and acidic residues.

This sequence belongs to the protease inhibitor I34 family.

Functionally, specific and potent inhibitor for yeast aspartic protease A (yscA). The proteinase acts as a folding template stabilizing the helical conformation in the inhibitor, which results in the potent and specific blockage of the proteolytic activity. The sequence is that of Protease A inhibitor 3 (PAI3) from Saccharomyces cerevisiae (strain ATCC 204508 / S288c) (Baker's yeast).